The chain runs to 129 residues: Large ribosomal subunit protein uL22 (129 aa).

The protein belongs to the universal ribosomal protein uL22 family. As to quaternary structure, part of the 50S ribosomal subunit.

This protein binds specifically to 23S rRNA; its binding is stimulated by other ribosomal proteins, e.g. L4, L17, and L20. It is important during the early stages of 50S assembly. It makes multiple contacts with different domains of the 23S rRNA in the assembled 50S subunit and ribosome. Its function is as follows. The globular domain of the protein is located near the polypeptide exit tunnel on the outside of the subunit, while an extended beta-hairpin is found that lines the wall of the exit tunnel in the center of the 70S ribosome. The protein is Large ribosomal subunit protein uL22 of Prochlorococcus marinus (strain MIT 9211).